The sequence spans 382 residues: MKALHFGAGNIGRGFIGKLLADAGIQLTFADVNQVVLDALNARHSYQVHVVGETEQVDTVSGVNAVSSIGDDVVDLIAQVDLVTTAVGPVVLERIAPAIAKGLVKRKEQGNESPLNIIACENMVRGTTQLKGHVMNALPEDAKAWVEEHVGFVDSAVDRIVPPSASATNDPLEVTVETFSEWIVDKTQFKGALPNIPGMELTDNLMAFVERKLFTLNTGHAITAYLGKLAAHQTIRDAILDEKIRAVVKGAMEESGAVLIKRYGFDADKHAAYIQKILGRFENPYLKDDVERVGRQPLRKLSAGDRLIKPLLGTLEYGLPHKNLIEGIAAAMHFRSEDDPQAQELAALIADKGPQAALAQISGLDANSEVVSEAVTAYKAMQ.

Alanine 3–glycine 14 is a binding site for NAD(+). An N6-acetyllysine modification is found at lysine 269.

Belongs to the mannitol dehydrogenase family.

It carries out the reaction D-mannitol 1-phosphate + NAD(+) = beta-D-fructose 6-phosphate + NADH + H(+). The polypeptide is Mannitol-1-phosphate 5-dehydrogenase (Escherichia coli O7:K1 (strain IAI39 / ExPEC)).